Reading from the N-terminus, the 473-residue chain is MKTLYSLRRFYPVETLFNGTLALAGRDQETTGFAWWAGNARLINLSGKLLGAHVAHAGLIVFWAGAMNLFEVAHFVPEKPMYEQGLILLPHLATLGWGVGPGGEVVDTFPYFVSGVLHLISSAVLGFGGIYHALLGPETLEESFPFFGYVWKDRNKMTTILGIHLILLGLGAFLLVFKALYFGGVYDTWAPGGGDVRRITNLTLSPSIIFGYLLKSPFGGEGWIVSVDDLEDIIGGHVWLGSICILGGIWHILTKPFAWARRAFVWSGEAYLSYSLGALSVFGFIACCFVWFNNTAYPSEFYGPTGPEASQAQAFTFLVRDQRLGANVGSAQGPTGLGKYLMRSPTGEIIFGGETMRFWDLRAPWLEPLRGPNGLDLSRLKKDIQPWQERRSAEYMTHAPLGSLNSVGGVATEINAVNYVSPRSWLATSHFVLGFFFFVGHLWHAGRARAAAAGFEKGIDRDFEPVLFMTPLN.

Residues 1 to 14 (MKTLYSLRRFYPVE) constitute a propeptide that is removed on maturation. Position 15 is an N-acetylthreonine (threonine 15). Threonine 15 carries the phosphothreonine modification. A run of 5 helical transmembrane segments spans residues 69–93 (LFEVAHFVPEKPMYEQGLILLPHLA), 134–155 (LLGPETLEESFPFFGYVWKDRN), 178–200 (KALYFGGVYDTWAPGGGDVRRIT), 255–275 (KPFAWARRAFVWSGEAYLSYS), and 291–312 (WFNNTAYPSEFYGPTGPEASQA). Glutamate 367 is a binding site for [CaMn4O5] cluster. The chain crosses the membrane as a helical span at residues 447–471 (RARAAAAGFEKGIDRDFEPVLFMTP).

The protein belongs to the PsbB/PsbC family. PsbC subfamily. As to quaternary structure, PSII is composed of 1 copy each of membrane proteins PsbA, PsbB, PsbC, PsbD, PsbE, PsbF, PsbH, PsbI, PsbJ, PsbK, PsbL, PsbM, PsbT, PsbX, PsbY, PsbZ, Psb30/Ycf12, at least 3 peripheral proteins of the oxygen-evolving complex and a large number of cofactors. It forms dimeric complexes. Binds multiple chlorophylls and provides some of the ligands for the Ca-4Mn-5O cluster of the oxygen-evolving complex. It may also provide a ligand for a Cl- that is required for oxygen evolution. PSII binds additional chlorophylls, carotenoids and specific lipids. serves as cofactor.

The protein resides in the plastid. The protein localises to the chloroplast thylakoid membrane. Its function is as follows. One of the components of the core complex of photosystem II (PSII). It binds chlorophyll and helps catalyze the primary light-induced photochemical processes of PSII. PSII is a light-driven water:plastoquinone oxidoreductase, using light energy to abstract electrons from H(2)O, generating O(2) and a proton gradient subsequently used for ATP formation. The polypeptide is Photosystem II CP43 reaction center protein (Nuphar advena (Common spatterdock)).